The sequence spans 377 residues: Transmembrane protein 237A (377 aa).

Basic and acidic residues-rich tracts occupy residues 1 to 11, 43 to 64, and 74 to 87; these read MCVTSRADKMP, LESR…DNPP, and HTFE…DHPN. The disordered stretch occupies residues 1 to 124; that stretch reads MCVTSRADKM…NQSHNELGVE (124 aa). The next 4 helical transmembrane spans lie at 198–218, 239–259, 273–293, and 326–346; these read IIGL…IIVV, LAYP…VSAF, GFLT…ALIL, and PWIV…VFVA.

It belongs to the TMEM237 family.

The protein resides in the membrane. Its subcellular location is the cell projection. It is found in the cilium. In terms of biological role, component of the transition zone in primary cilia. Required for ciliogenesis. The sequence is that of Transmembrane protein 237A (tmem237a) from Danio rerio (Zebrafish).